The primary structure comprises 57 residues: Alpha-conotoxin-like Sm1.2 (57 aa).

The N-terminal stretch at 1–16 is a signal peptide; it reads MFTVFLLVVLATTVVS. The propeptide occupies 17-42; sequence FPSDRESDGANDEARTDEPEEHGPDR. Residues 17–46 are disordered; sequence FPSDRESDGANDEARTDEPEEHGPDRNGCC. The span at 19–41 shows a compositional bias: basic and acidic residues; sequence SDRESDGANDEARTDEPEEHGPD. 2 cysteine pairs are disulfide-bonded: Cys-45/Cys-51 and Cys-46/Cys-56. Cys-56 carries the cysteine amide modification.

This sequence belongs to the conotoxin A superfamily. In terms of tissue distribution, expressed by the venom duct.

Its subcellular location is the secreted. Functionally, alpha-conotoxins act on postsynaptic membranes, they bind to the nicotinic acetylcholine receptors (nAChR) and thus inhibit them. The chain is Alpha-conotoxin-like Sm1.2 from Conus stercusmuscarum (Fly-specked cone).